Consider the following 143-residue polypeptide: ATP synthase subunit b' (143 aa).

The chain crosses the membrane as a helical span at residues 6–26 (ATLPLMALQFVVLAFLLNAIF).

It belongs to the ATPase B chain family. As to quaternary structure, F-type ATPases have 2 components, F(1) - the catalytic core - and F(0) - the membrane proton channel. F(1) has five subunits: alpha(3), beta(3), gamma(1), delta(1), epsilon(1). F(0) has four main subunits: a(1), b(1), b'(1) and c(10-14). The alpha and beta chains form an alternating ring which encloses part of the gamma chain. F(1) is attached to F(0) by a central stalk formed by the gamma and epsilon chains, while a peripheral stalk is formed by the delta, b and b' chains.

Its subcellular location is the cellular thylakoid membrane. In terms of biological role, f(1)F(0) ATP synthase produces ATP from ADP in the presence of a proton or sodium gradient. F-type ATPases consist of two structural domains, F(1) containing the extramembraneous catalytic core and F(0) containing the membrane proton channel, linked together by a central stalk and a peripheral stalk. During catalysis, ATP synthesis in the catalytic domain of F(1) is coupled via a rotary mechanism of the central stalk subunits to proton translocation. Its function is as follows. Component of the F(0) channel, it forms part of the peripheral stalk, linking F(1) to F(0). The b'-subunit is a diverged and duplicated form of b found in plants and photosynthetic bacteria. This chain is ATP synthase subunit b', found in Synechocystis sp. (strain ATCC 27184 / PCC 6803 / Kazusa).